The sequence spans 341 residues: G2/mitotic-specific cyclin C13-1 (341 aa).

Belongs to the cyclin family. Cyclin AB subfamily.

Its function is as follows. Essential for the control of the cell cycle at the G2/M (mitosis) transition. Interacts with the CDC2 and CDK2 protein kinases to form MPF. G2/M cyclins accumulate steadily during G2 and are abruptly destroyed at mitosis. In Daucus carota (Wild carrot), this protein is G2/mitotic-specific cyclin C13-1.